The chain runs to 1805 residues: MKASSGDQGSPPCFLRFPRPVRVVSGAEAELKCVVLGEPPPTVLWEKGGQQLVASERLSFPEDGAEHGLLLSGALPTDAGVYVCRARNAAGEAYAAAAVTVLEPPAPEPEPQSSECPPPPPGTGEGAPVFLTGPQSQWVLRGAEVVLTCQVGGLPEPKLYWEKDGMALDEVWDSSHYTLEPDRGASDGGASLTLRILAARLPDSGVYVCHARNAHGHAQAGALLQVHQPHENPPQDPDEPPVRVIEPLKCAPKTFWVNEGKHAKFRCYVMGKPEPEIEWHLEGRPLLPDRRRLMYRDRDGGFVLKVLYCQAKDRGLYVCAARNSAGQTLSAVQLHVKEPRLRFTRPLQDVEGREHGIVVLECKVPNSRIPTAWFREDQRLLPCRKYEQIEEGTVRRLVIHRLKADDDGVYLCEMRGRVRTVANVTVKGPILKRLPRKLDVLEGENAVLLVETQEAGVQGCWSRDGEELPATCQSSCGHMHALVLPGVTREDAGEVTFSLGNSRTTTLLRVKCVKHSPPGPPVLVEMFKGQKNTVLLTWKPPEPPPETSFIYRLERQEVGSEDWIQCFSIEKAGAVEVPGDCVPTEGDYRFRICTVSEHGRSPHVVFNGSAHLVPTARLVSGLEDVQVYDGEDAVFSLDLSTIIQGSWFLNGELLKNDEAEGQVEPGALRYRIEQKGLQHRLILQTVKHQDNGALVGFICPGVQDSAALSIQESPVHILSPQDKVLLTFTTSERVVLTCELSRVDFPATWYKDGQKVEESESLVVKMDGRKHRLILPEAQVRDSGEFECRTEGISAFFSVTVQDPPVHIVDPQEHVFVHAITSESVMLTCEVDREDAAVHWYKDGQEVEESAVIVLEKEGPRHRLVLPAAQPSDGGEFQCVVGDERAYFTVTITDVSSWIVYPNGKVYVAAVRLERVVLTCELCRPWAEVRWTKDGEEVLESPALLLEKEDTIRRLVLPSVQLEDSGEYLCEIHDESASFTITVTEPPVRIIYPQDEVTLHAVSLECVVLTCELSRVDAPVRWYKDGLEVEETEALVLQSDGPRRRLVLPAAQPEDGGEFVCDAGDDSAFFTVTVTAPPERIVHPVARSLDLQFGAPGHVELRCEVAPAGSQVRWYKDGLEVEVSDALQLGAEGPARTLTLPHAQPEDAGEYVCETRDEAVTFNVSLAELPVQFLAPEAVPNPLCVVPGEPVMLSCELSRASAHVSWSHNGNPVKQGEGLELRAEGPRRILCIQAADLAHTGVYTCQSGTAPGAPSLSFNVQVAEPPPVKLVSELTPLTVHEGDDATFQCEVSPPDAEVTWLRNGAIVTPGPQLEMVHSGSSRTLIIRGCQLKDAGTVTARAGATDTSARLHVRETELLFLRRLQDVRAEEGQDVYLEVETGRVGAPGAVRWLRGGEPLPLDSRLTTAQDGHVHRLSIHGVLLTDQGTYGCESHHDRTLARLSVRPRQLRELRPLEDVTVHEGGSATFQLELSQEGVTGEWAQGGVRLHPGPKCHIHSEGRTHCLVLSGLGLADSGCISFTADTLRCAARLTVREVPVTIVQGPQDLEVTEGDTATFECELSQTLADVIWEKDGQALSLSPRLRLQSLGTRRLLLLRRCSSSDAGTYCCAVGTARSGPARLTVREREVSVLGELRSLSAREGDSATFECTVSESETTGRWELGGRALRPGGRVRIRQEGKKHILVLSELRTEDTGEVCFQAGPAQSLARLEVEALPLQMCRRPPREKTVLVDRRAVLEVTVSRPGGHVCWMREGVELCPGSKYEMRSHGTTHSLVIHDVRPEDQGTYSCQAGQDSADTQLLVEGDD.

Position 10 is a phosphoserine (serine 10). Positions proline 12–threonine 100 constitute an Ig-like 1 domain. The segment at phenylalanine 17–arginine 19 is interaction with TTN. A disulfide bridge connects residues cysteine 33 and cysteine 84. The interval arginine 85–tyrosine 94 is interaction with TTN. Pro residues predominate over residues proline 104–glycine 122. Residues proline 104 to leucine 131 form a disordered region. Ig-like domains follow at residues proline 128–glutamine 225, proline 240–serine 330, and proline 339–threonine 425. 3 disulfide bridges follow: cysteine 149-cysteine 209, cysteine 267-cysteine 319, and cysteine 362-cysteine 412. The Fibronectin type-III domain occupies proline 517–threonine 615. 10 consecutive Ig-like domains span residues proline 720–threonine 800, proline 804–threonine 891, proline 902–threonine 982, proline 986–threonine 1075, proline 1078–serine 1165, proline 1176–glutamine 1261, proline 1266–histidine 1351, threonine 1355–serine 1442, proline 1536–serine 1628, and proline 1702–glutamine 1798. Intrachain disulfides connect cysteine 738–cysteine 788, cysteine 829–cysteine 879, cysteine 920–cysteine 970, cysteine 1011–cysteine 1061, cysteine 1103–cysteine 1153, and cysteine 1195–cysteine 1245. Residues cysteine 1558 and cysteine 1608 are joined by a disulfide bond.

As to quaternary structure, component of the 3M complex, composed of core components CUL7, CCDC8 and OBSL1. Interacts with CCDC8. Interacts with CUL7; the interaction is direct. Interacts with FBXW8. Interacts (via N-terminal Ig-like domain) with TTN/titin (via C-terminal Ig-like domain); the interaction is direct. Expressed in granule neurons, with levels decreasing with neuronal maturation.

The protein localises to the cytoplasm. It localises to the perinuclear region. It is found in the golgi apparatus. Its function is as follows. Core component of the 3M complex, a complex required to regulate microtubule dynamics and genome integrity. It is unclear how the 3M complex regulates microtubules, it could act by controlling the level of a microtubule stabilizer. Acts as a regulator of the Cul7-RING(FBXW8) ubiquitin-protein ligase, playing a critical role in the ubiquitin ligase pathway that regulates Golgi morphogenesis and dendrite patterning in brain. Required to localize CUL7 to the Golgi apparatus in neurons. In Rattus norvegicus (Rat), this protein is Obscurin-like protein 1 (Obsl1).